The primary structure comprises 338 residues: Putative ankyrin repeat protein CBU_0781 (338 aa).

The segment at 1 to 31 (MSRRETPTSTISSTPTGTRTPRRRLSRKGHP) is disordered. The segment covering 7 to 19 (PTSTISSTPTGTR) has biased composition (low complexity). Residues 20 to 31 (TPRRRLSRKGHP) are compositionally biased toward basic residues. 2 ANK repeats span residues 92 to 124 (QGDT…IVNK) and 125 to 157 (LGET…IKYK). A coiled-coil region spans residues 197-242 (SQIMASDKEIDEIIRNARNLQIIKKEKREAEERARTKKSKQITLQR). The segment at 319-338 (KKEDTTLSRNNSLSCLSSPR) is disordered. The segment covering 325–338 (LSRNNSLSCLSSPR) has biased composition (low complexity).

The sequence is that of Putative ankyrin repeat protein CBU_0781 from Coxiella burnetii (strain RSA 493 / Nine Mile phase I).